A 327-amino-acid chain; its full sequence is Fructose-1,6-bisphosphatase class 1 (327 aa).

Residues Glu-84, Asp-103, Leu-105, and Asp-106 each contribute to the Mg(2+) site. Residues 106 to 109, Asn-198, and Lys-264 contribute to the substrate site; that span reads DGSS. Glu-270 serves as a coordination point for Mg(2+).

Belongs to the FBPase class 1 family. In terms of assembly, homotetramer. Mg(2+) serves as cofactor.

The protein localises to the cytoplasm. The enzyme catalyses beta-D-fructose 1,6-bisphosphate + H2O = beta-D-fructose 6-phosphate + phosphate. The protein operates within carbohydrate biosynthesis; gluconeogenesis. The protein is Fructose-1,6-bisphosphatase class 1 of Psychrobacter cryohalolentis (strain ATCC BAA-1226 / DSM 17306 / VKM B-2378 / K5).